A 368-amino-acid chain; its full sequence is Lipoyl synthase, chloroplastic (368 aa).

Disordered regions lie at residues Met-1–Val-30 and Pro-42–Glu-61. Positions 94, 99, 105, 131, 135, 138, and 346 each coordinate [4Fe-4S] cluster. The Radical SAM core domain occupies Gly-114 to Arg-335.

It belongs to the radical SAM superfamily. Lipoyl synthase family. [4Fe-4S] cluster is required as a cofactor.

The protein localises to the plastid. Its subcellular location is the chloroplast. It carries out the reaction [[Fe-S] cluster scaffold protein carrying a second [4Fe-4S](2+) cluster] + N(6)-octanoyl-L-lysyl-[protein] + 2 oxidized [2Fe-2S]-[ferredoxin] + 2 S-adenosyl-L-methionine + 4 H(+) = [[Fe-S] cluster scaffold protein] + N(6)-[(R)-dihydrolipoyl]-L-lysyl-[protein] + 4 Fe(3+) + 2 hydrogen sulfide + 2 5'-deoxyadenosine + 2 L-methionine + 2 reduced [2Fe-2S]-[ferredoxin]. Its pathway is protein modification; protein lipoylation via endogenous pathway; protein N(6)-(lipoyl)lysine from octanoyl-[acyl-carrier-protein]: step 2/2. Its function is as follows. Catalyzes the radical-mediated insertion of two sulfur atoms into the C-6 and C-8 positions of the octanoyl moiety bound to the lipoyl domains of lipoate-dependent enzymes, thereby converting the octanoylated domains into lipoylated derivatives. This is Lipoyl synthase, chloroplastic from Sorghum bicolor (Sorghum).